A 144-amino-acid polypeptide reads, in one-letter code: Large ribosomal subunit protein uL15 (144 aa).

The disordered stretch occupies residues 1-53 (MRLNSLSPAEGAKHSAKRLGRGIGSGLGKTGGRGHKGQKSRTGGGVRRGFEGG). Residues 21–31 (RGIGSGLGKTG) show a composition bias toward gly residues.

This sequence belongs to the universal ribosomal protein uL15 family. Part of the 50S ribosomal subunit.

Its function is as follows. Binds to the 23S rRNA. This Glaesserella parasuis serovar 5 (strain SH0165) (Haemophilus parasuis) protein is Large ribosomal subunit protein uL15.